The following is a 1186-amino-acid chain: ATP-dependent helicase/nuclease subunit A (1186 aa).

The 459-residue stretch at 2–460 folds into the UvrD-like helicase ATP-binding domain; it reads NFSKNQRAVI…IELSENYRSQ (459 aa). 23–30 lines the ATP pocket; it reads ASAGSGKT. Residues 487 to 771 enclose the UvrD-like helicase C-terminal domain; that stretch reads DVELKAANRD…SVMTIHAAKG (285 aa).

It belongs to the helicase family. AddA subfamily. In terms of assembly, heterodimer of AddA and AddB/RexB. Mg(2+) is required as a cofactor.

The enzyme catalyses Couples ATP hydrolysis with the unwinding of duplex DNA by translocating in the 3'-5' direction.. It catalyses the reaction ATP + H2O = ADP + phosphate + H(+). In terms of biological role, the heterodimer acts as both an ATP-dependent DNA helicase and an ATP-dependent, dual-direction single-stranded exonuclease. Recognizes the chi site generating a DNA molecule suitable for the initiation of homologous recombination. The AddA nuclease domain is required for chi fragment generation; this subunit has the helicase and 3' -&gt; 5' nuclease activities. This is ATP-dependent helicase/nuclease subunit A from Oenococcus oeni (strain ATCC BAA-331 / PSU-1).